The following is a 630-amino-acid chain: MDFPSRFDVIVIGGGHAGTEAALASARMGVKTLLLTHNVETLGHMSCNPAIGGIGKSHLVKEIDALGGAMALATDKSGIQFRVLNNRKGPAVRATRAQADRAIYKAVVREILENQPNLWIFQQSCDDLIVEQDQVKGVVTQMGLRFFAESVVLTTGTFLGGLIHIGLQNHSGGRAGDPPSIALAHRMRELPLRVGRLKTGTPPRIDGRSVDFSVMTEQPGDTPIPVMSFMGNAEMHPRQVSCWITHTNARTHEIIASNLDRSPMYSGVIEGVGPRYCPSIEDKIHRFADKESHQVFIEPEGLNTHELYPNGISTSLPFDVQLELVRSIRGMENAHIVRPGYAIEYDYFDPRDLKYSLETKVIGGLFFAGQINGTTGYEEAGAQGLLAGTNAALRAQGRDSWCPRRDEAYIGVLVDDLITLGTQEPYRMFTSRAEYRLILREDNADLRLTEKGRELGLIDDLRWAAFCAKRDGIEREEQRLKSTWVRPNTEQGQAVVDKFGTPLSHEYSLLNLLARPEIDYAGLIEATGGEAIDPQVAEQVEIRTKYAGYIDRQQDEIARLRASEDTRLPVDIDYTTISGLSKEIQGKLSQTRPETLGQASRIPGVTPAAISLMLIHLKKRGAGRELEQSA.

13–18 (GGGHAG) is a binding site for FAD. Residue 273–287 (GPRYCPSIEDKIHRF) coordinates NAD(+).

Belongs to the MnmG family. Homodimer. Heterotetramer of two MnmE and two MnmG subunits. FAD is required as a cofactor.

The protein localises to the cytoplasm. Its function is as follows. NAD-binding protein involved in the addition of a carboxymethylaminomethyl (cmnm) group at the wobble position (U34) of certain tRNAs, forming tRNA-cmnm(5)s(2)U34. The polypeptide is tRNA uridine 5-carboxymethylaminomethyl modification enzyme MnmG (Pseudomonas putida (strain ATCC 700007 / DSM 6899 / JCM 31910 / BCRC 17059 / LMG 24140 / F1)).